We begin with the raw amino-acid sequence, 237 residues long: tRNA1(Val) (adenine(37)-N6)-methyltransferase (237 aa).

Belongs to the methyltransferase superfamily. tRNA (adenine-N(6)-)-methyltransferase family.

Its subcellular location is the cytoplasm. It carries out the reaction adenosine(37) in tRNA1(Val) + S-adenosyl-L-methionine = N(6)-methyladenosine(37) in tRNA1(Val) + S-adenosyl-L-homocysteine + H(+). Its function is as follows. Specifically methylates the adenine in position 37 of tRNA(1)(Val) (anticodon cmo5UAC). The sequence is that of tRNA1(Val) (adenine(37)-N6)-methyltransferase from Bacteroides fragilis (strain YCH46).